The sequence spans 86 residues: Small ribosomal subunit protein bS18 (86 aa).

The protein belongs to the bacterial ribosomal protein bS18 family. Part of the 30S ribosomal subunit. Forms a tight heterodimer with protein bS6.

Functionally, binds as a heterodimer with protein bS6 to the central domain of the 16S rRNA, where it helps stabilize the platform of the 30S subunit. In Herpetosiphon aurantiacus (strain ATCC 23779 / DSM 785 / 114-95), this protein is Small ribosomal subunit protein bS18.